We begin with the raw amino-acid sequence, 248 residues long: Ubiquinone biosynthesis O-methyltransferase (248 aa).

4 residues coordinate S-adenosyl-L-methionine: Arg40, Gly71, Asp92, and Met135.

The protein belongs to the methyltransferase superfamily. UbiG/COQ3 family.

It catalyses the reaction a 3-demethylubiquinol + S-adenosyl-L-methionine = a ubiquinol + S-adenosyl-L-homocysteine + H(+). It carries out the reaction a 3-(all-trans-polyprenyl)benzene-1,2-diol + S-adenosyl-L-methionine = a 2-methoxy-6-(all-trans-polyprenyl)phenol + S-adenosyl-L-homocysteine + H(+). It participates in cofactor biosynthesis; ubiquinone biosynthesis. Its function is as follows. O-methyltransferase that catalyzes the 2 O-methylation steps in the ubiquinone biosynthetic pathway. This Dinoroseobacter shibae (strain DSM 16493 / NCIMB 14021 / DFL 12) protein is Ubiquinone biosynthesis O-methyltransferase.